The chain runs to 199 residues: Protein GrpE (199 aa).

Positions 1–40 (MEKKKHGTNSISEALKVKAAVEQETATPEPTPQSETESAD) are disordered. A compositionally biased stretch (polar residues) spans 24-36 (ETATPEPTPQSET).

The protein belongs to the GrpE family. In terms of assembly, homodimer.

It localises to the cytoplasm. In terms of biological role, participates actively in the response to hyperosmotic and heat shock by preventing the aggregation of stress-denatured proteins, in association with DnaK and GrpE. It is the nucleotide exchange factor for DnaK and may function as a thermosensor. Unfolded proteins bind initially to DnaJ; upon interaction with the DnaJ-bound protein, DnaK hydrolyzes its bound ATP, resulting in the formation of a stable complex. GrpE releases ADP from DnaK; ATP binding to DnaK triggers the release of the substrate protein, thus completing the reaction cycle. Several rounds of ATP-dependent interactions between DnaJ, DnaK and GrpE are required for fully efficient folding. This chain is Protein GrpE, found in Geotalea uraniireducens (strain Rf4) (Geobacter uraniireducens).